Here is a 232-residue protein sequence, read N- to C-terminus: Phosphatidylserine decarboxylase proenzyme (232 aa).

Residue Ser-190 is the Schiff-base intermediate with substrate; via pyruvic acid of the active site. Ser-190 is modified (pyruvic acid (Ser); by autocatalysis).

It belongs to the phosphatidylserine decarboxylase family. PSD-A subfamily. In terms of assembly, heterodimer of a large membrane-associated beta subunit and a small pyruvoyl-containing alpha subunit. Requires pyruvate as cofactor. Post-translationally, is synthesized initially as an inactive proenzyme. Formation of the active enzyme involves a self-maturation process in which the active site pyruvoyl group is generated from an internal serine residue via an autocatalytic post-translational modification. Two non-identical subunits are generated from the proenzyme in this reaction, and the pyruvate is formed at the N-terminus of the alpha chain, which is derived from the carboxyl end of the proenzyme. The post-translation cleavage follows an unusual pathway, termed non-hydrolytic serinolysis, in which the side chain hydroxyl group of the serine supplies its oxygen atom to form the C-terminus of the beta chain, while the remainder of the serine residue undergoes an oxidative deamination to produce ammonia and the pyruvoyl prosthetic group on the alpha chain.

It is found in the cell membrane. It catalyses the reaction a 1,2-diacyl-sn-glycero-3-phospho-L-serine + H(+) = a 1,2-diacyl-sn-glycero-3-phosphoethanolamine + CO2. It functions in the pathway phospholipid metabolism; phosphatidylethanolamine biosynthesis; phosphatidylethanolamine from CDP-diacylglycerol: step 2/2. Its function is as follows. Catalyzes the formation of phosphatidylethanolamine (PtdEtn) from phosphatidylserine (PtdSer). The polypeptide is Phosphatidylserine decarboxylase proenzyme (Bartonella bacilliformis (strain ATCC 35685 / KC583 / Herrer 020/F12,63)).